We begin with the raw amino-acid sequence, 258 residues long: Tryptophan synthase alpha chain (258 aa).

Active-site proton acceptor residues include Glu-47 and Asp-58.

The protein belongs to the TrpA family. Tetramer of two alpha and two beta chains.

It catalyses the reaction (1S,2R)-1-C-(indol-3-yl)glycerol 3-phosphate + L-serine = D-glyceraldehyde 3-phosphate + L-tryptophan + H2O. The protein operates within amino-acid biosynthesis; L-tryptophan biosynthesis; L-tryptophan from chorismate: step 5/5. Functionally, the alpha subunit is responsible for the aldol cleavage of indoleglycerol phosphate to indole and glyceraldehyde 3-phosphate. The sequence is that of Tryptophan synthase alpha chain from Bacillus thuringiensis (strain Al Hakam).